Here is a 426-residue protein sequence, read N- to C-terminus: Trophoblast glycoprotein (426 aa).

A signal peptide spans 1–31 (MPGAGSRGPSAGDGRLRLARLALVLLGWVSA). The Extracellular portion of the chain corresponds to 32–361 (SAPSSSVPSS…AVLPQSLQTS (330 aa)). The segment covering 33-47 (APSSSVPSSSTSPAA) has biased composition (low complexity). The disordered stretch occupies residues 33 to 53 (APSSSVPSSSTSPAAFLASGS). In terms of domain architecture, LRRNT spans 53-91 (SAQPPPAERCPAACECSEAARTVKCVNRNLLEVPADLPP). Disulfide bonds link Cys-62-Cys-68 and Cys-66-Cys-77. 7 LRR repeats span residues 92 to 113 (YVRNLFLTGNQMTVLPAGAFAR), 116 to 139 (PLADLEALNLSGNHLKEVCAGAFE), 141 to 163 (LPGLRRLDLSHNPLTNLSAFAFA), 172 to 210 (PSPLEELILNHIVPPEDQRQNGSFEGMVAFEGMVAAALR), 215 to 238 (LRGLTRLELASNHFLFLPRDLLAQ), 239 to 261 (LPSLRYLDLRNNSLVSLTYASFR), and 262 to 281 (NLTHLESLHLEDNALKVLHN). Asn-124 carries an N-linked (GlcNAc...) asparagine glycan. Residue Asn-281 is glycosylated (N-linked (GlcNAc...) asparagine). An LRRCT domain is found at 289 to 352 (GLAHVKVFLD…LNSSDLDCDA (64 aa)). Cystine bridges form between Cys-304–Cys-329 and Cys-306–Cys-350. Residues 362 to 382 (YVFLGIVLALIGAIFLLVLYL) traverse the membrane as a helical segment. At 383-426 (NRKGIKKWMHNIRDACRDHMEGYHYRYEINADPRLTNLSSNSDV) the chain is on the cytoplasmic side. Ser-424 is subject to Phosphoserine.

Post-translationally, highly glycosylated. Highly expressed in embryo and placenta. In adult, expressed only in brain and ovary. Not detected in kidney small intestine, heart, spleen, testis, liver, lung, thymus and stomach.

It localises to the cell membrane. Functionally, may function as an inhibitor of Wnt/beta-catenin signaling by indirectly interacting with LRP6 and blocking Wnt3a-dependent LRP6 internalization. In Mus musculus (Mouse), this protein is Trophoblast glycoprotein (Tpbg).